Here is a 330-residue protein sequence, read N- to C-terminus: PDZ and LIM domain protein 4 (330 aa).

The PDZ domain maps to 8-84 (RGPSPWGFRL…QLLLSVSRAE (77 aa)). Disordered regions lie at residues 106-152 (EPEP…SSSA) and 163-182 (LHIS…RNRN). Over residues 139–152 (QHPQPSRPHASSSA) the composition is skewed to polar residues. The LIM zinc-binding domain occupies 255–305 (CTRCGNGIVGTIVKARDKLYHPECFMCDDCGLNLKQRGYFFIEEQLYCETH).

Interacts (via LIM domain) with PTPN13. Interacts (via PDZ domain) with ACTN1.

Its subcellular location is the cytoplasm. It localises to the cytoskeleton. It is found in the cell projection. The protein resides in the dendritic spine. The protein localises to the early endosome membrane. Its subcellular location is the recycling endosome membrane. It localises to the nucleus. It is found in the perinuclear region. The protein resides in the lamellipodium. The protein localises to the synapse. Its subcellular location is the synaptosome. In terms of biological role, suppresses SRC activation by recognizing and binding to active SRC and facilitating PTPN13-mediated dephosphorylation of SRC 'Tyr-419' leading to its inactivation. Inactivated SRC dissociates from this protein allowing the initiation of a new SRC inactivation cycle. Involved in reorganization of the actin cytoskeleton. In nonmuscle cells, binds to ACTN1 (alpha-actinin-1), increases the affinity of ACTN1 to F-actin (filamentous actin), and promotes formation of actin stress fibers. Involved in regulation of the synaptic AMPA receptor transport in dendritic spines of hippocampal pyramidal neurons directing the receptors toward an insertion at the postsynaptic membrane. Links endosomal surface-internalized GRIA1-containing AMPA receptors to the alpha-actinin/actin cytoskeleton. Increases AMPA receptor-mediated excitatory postsynaptic currents in neurons. This chain is PDZ and LIM domain protein 4 (PDLIM4), found in Gallus gallus (Chicken).